Here is a 210-residue protein sequence, read N- to C-terminus: Imidazole glycerol phosphate synthase subunit HisH (210 aa).

One can recognise a Glutamine amidotransferase type-1 domain in the interval 7-210; that stretch reads KVVIIDTGCA…SQLIKNFLEM (204 aa). The Nucleophile role is filled by cysteine 82. Residues histidine 192 and glutamate 194 contribute to the active site.

As to quaternary structure, heterodimer of HisH and HisF.

It localises to the cytoplasm. It catalyses the reaction 5-[(5-phospho-1-deoxy-D-ribulos-1-ylimino)methylamino]-1-(5-phospho-beta-D-ribosyl)imidazole-4-carboxamide + L-glutamine = D-erythro-1-(imidazol-4-yl)glycerol 3-phosphate + 5-amino-1-(5-phospho-beta-D-ribosyl)imidazole-4-carboxamide + L-glutamate + H(+). It carries out the reaction L-glutamine + H2O = L-glutamate + NH4(+). It participates in amino-acid biosynthesis; L-histidine biosynthesis; L-histidine from 5-phospho-alpha-D-ribose 1-diphosphate: step 5/9. IGPS catalyzes the conversion of PRFAR and glutamine to IGP, AICAR and glutamate. The HisH subunit catalyzes the hydrolysis of glutamine to glutamate and ammonia as part of the synthesis of IGP and AICAR. The resulting ammonia molecule is channeled to the active site of HisF. The polypeptide is Imidazole glycerol phosphate synthase subunit HisH (Photobacterium profundum (strain SS9)).